The chain runs to 378 residues: Erythronate-4-phosphate dehydrogenase (378 aa).

Substrate-binding residues include S45 and T66. The NAD(+) site is built by D146 and T175. R208 is a catalytic residue. NAD(+) is bound at residue D232. E237 is a catalytic residue. The active-site Proton donor is H254. G257 is a binding site for NAD(+). Y258 provides a ligand contact to substrate.

The protein belongs to the D-isomer specific 2-hydroxyacid dehydrogenase family. PdxB subfamily. Homodimer.

It is found in the cytoplasm. It carries out the reaction 4-phospho-D-erythronate + NAD(+) = (R)-3-hydroxy-2-oxo-4-phosphooxybutanoate + NADH + H(+). It functions in the pathway cofactor biosynthesis; pyridoxine 5'-phosphate biosynthesis; pyridoxine 5'-phosphate from D-erythrose 4-phosphate: step 2/5. Functionally, catalyzes the oxidation of erythronate-4-phosphate to 3-hydroxy-2-oxo-4-phosphonooxybutanoate. This Escherichia coli (strain 55989 / EAEC) protein is Erythronate-4-phosphate dehydrogenase.